Here is a 66-residue protein sequence, read N- to C-terminus: DNA gyrase inhibitor YacG (66 aa).

Positions 9, 12, 28, and 32 each coordinate Zn(2+). A disordered region spans residues 45–66 (HKIAGAEESEDELYSGDLEPRH).

This sequence belongs to the DNA gyrase inhibitor YacG family. Interacts with GyrB. Requires Zn(2+) as cofactor.

Inhibits all the catalytic activities of DNA gyrase by preventing its interaction with DNA. Acts by binding directly to the C-terminal domain of GyrB, which probably disrupts DNA binding by the gyrase. The sequence is that of DNA gyrase inhibitor YacG from Pseudomonas entomophila (strain L48).